Reading from the N-terminus, the 759-residue chain is Xaa-Pro dipeptidyl-peptidase (759 aa).

Catalysis depends on charge relay system residues serine 347, aspartate 467, and histidine 497.

It belongs to the peptidase S15 family. Homodimer.

It localises to the cytoplasm. The enzyme catalyses Hydrolyzes Xaa-Pro-|- bonds to release unblocked, N-terminal dipeptides from substrates including Ala-Pro-|-p-nitroanilide and (sequentially) Tyr-Pro-|-Phe-Pro-|-Gly-Pro-|-Ile.. Removes N-terminal dipeptides sequentially from polypeptides having unsubstituted N-termini provided that the penultimate residue is proline. The protein is Xaa-Pro dipeptidyl-peptidase of Streptococcus gordonii (strain Challis / ATCC 35105 / BCRC 15272 / CH1 / DL1 / V288).